The following is a 268-amino-acid chain: Tropinone reductase homolog At2g29370 (268 aa).

22–46 serves as a coordination point for NADP(+); that stretch reads LVTGGSKGLGKAVVEELAMLGARVH. S155 serves as a coordination point for substrate. The Proton acceptor role is filled by Y168.

This sequence belongs to the short-chain dehydrogenases/reductases (SDR) family. SDR65C subfamily.

The sequence is that of Tropinone reductase homolog At2g29370 from Arabidopsis thaliana (Mouse-ear cress).